A 291-amino-acid chain; its full sequence is Lactoylglutathione lyase (291 aa).

VOC domains are found at residues 24–149 (RLLH…LIQR) and 155–283 (PLCQ…LVDN). Positions 31, 82, and 96 each coordinate substrate. Residue histidine 96 is part of the active site. Glutamate 145 functions as the Proton donor/acceptor in the catalytic mechanism. Glutamate 145 is a binding site for Ni(2+). Active-site residues include glutamine 158 and glutamate 209. Position 209 (glutamate 209) interacts with Ni(2+).

Belongs to the glyoxalase I family. In terms of assembly, monomer. Ni(2+) is required as a cofactor. Post-translationally, phosphorylated after gibberellin treatment. As to expression, expressed in callus, stem, leaves, panicles and maturing seeds (at protein level).

The enzyme catalyses (R)-S-lactoylglutathione = methylglyoxal + glutathione. It participates in secondary metabolite metabolism; methylglyoxal degradation; (R)-lactate from methylglyoxal: step 1/2. Functionally, catalyzes the conversion of hemimercaptal, formed from methylglyoxal and glutathione, to S-lactoylglutathione. Involved in the detoxifiation of methylglyoxal. Can functionally complement growth defect of a yeast mutant lacking GLY I. Involved in abiotic stress response. Over-expression of GLYI-11 in tobacco increases tolerance to osmotic, oxidative and salt stresses. This is Lactoylglutathione lyase from Oryza sativa subsp. japonica (Rice).